A 162-amino-acid chain; its full sequence is 2-amino-4-hydroxy-6-hydroxymethyldihydropteridine pyrophosphokinase (162 aa).

This sequence belongs to the HPPK family.

The enzyme catalyses 6-hydroxymethyl-7,8-dihydropterin + ATP = (7,8-dihydropterin-6-yl)methyl diphosphate + AMP + H(+). It functions in the pathway cofactor biosynthesis; tetrahydrofolate biosynthesis; 2-amino-4-hydroxy-6-hydroxymethyl-7,8-dihydropteridine diphosphate from 7,8-dihydroneopterin triphosphate: step 4/4. Functionally, catalyzes the transfer of pyrophosphate from adenosine triphosphate (ATP) to 6-hydroxymethyl-7,8-dihydropterin, an enzymatic step in folate biosynthesis pathway. This Pseudomonas aeruginosa (strain ATCC 15692 / DSM 22644 / CIP 104116 / JCM 14847 / LMG 12228 / 1C / PRS 101 / PAO1) protein is 2-amino-4-hydroxy-6-hydroxymethyldihydropteridine pyrophosphokinase (folK).